The chain runs to 379 residues: Homoserine O-acetyltransferase (379 aa).

An AB hydrolase-1 domain is found at 52–356 (NVVVVLHALT…VYGHDGFLVE (305 aa)). The active-site Nucleophile is Ser157. A substrate-binding site is contributed by Arg227. Active-site residues include Asp320 and His350. Residue Asp351 participates in substrate binding.

Belongs to the AB hydrolase superfamily. MetX family. As to quaternary structure, homodimer.

The protein resides in the cytoplasm. It carries out the reaction L-homoserine + acetyl-CoA = O-acetyl-L-homoserine + CoA. It participates in amino-acid biosynthesis; L-methionine biosynthesis via de novo pathway; O-acetyl-L-homoserine from L-homoserine: step 1/1. In terms of biological role, transfers an acetyl group from acetyl-CoA to L-homoserine, forming acetyl-L-homoserine. The polypeptide is Homoserine O-acetyltransferase (Mycobacterium bovis (strain ATCC BAA-935 / AF2122/97)).